The following is a 596-amino-acid chain: Transcription factor EGL1 (596 aa).

The region spanning 401–450 is the bHLH domain; sequence EETGNHALSEKKRREKLNERFMTLRSIIPSISKIDKVSILDDTIEYLQDL.

As to quaternary structure, efficient DNA binding requires dimerization with another bHLH protein. Homodimer and heterodimer with GL3. Interacts with CPC, MYB0/GL1, MYB5, MYB23, MYB113, MYB114, MYB75/PAP1, MYB90/PAP2, TT2, TRY, TTG1 and MYB66/WER. As to expression, ubiquitous with higher levels in buds and flowers. Specifically localized in developing root hair cells. Expressed in epidermal root hair cells (trichoblasts) and moves to root hairless cells (atrichoblasts) by a cell-to-cell movement through plasmodesmata (at protein level).

The protein localises to the nucleus. In terms of biological role, transcription activator, when associated with MYB75/PAP1, MYB90/PAP2 or TT2. Involved in epidermal cell fate specification. Negatively regulates stomata formation but promotes trichome formation. Together with MYB66/WER, promotes the formation of non-hair cells in root epidermis cells in the N position. Whereas together with CPC, promotes the formation of hair cells in root epidermis cells in the H position by inhibiting non-hair cell formation. Also seems to play a role in the activation of anthocyanin biosynthesis, probably together with MYB75/PAP1. Involved in seed mucilage production. Activates the transcription of GL2. The protein is Transcription factor EGL1 (BHLH2) of Arabidopsis thaliana (Mouse-ear cress).